A 101-amino-acid chain; its full sequence is Cell division suppressor protein YneA (101 aa).

Residues 35–86 (MTVTVASGDTLWGLAKQYEPAHGLSPDEFIRWVVDVNRLPSSRLTAGEQIVI) form the LysM domain.

Belongs to the YneA family.

Its subcellular location is the cytoplasm. Inhibits cell division during the SOS response. Affects a later stage of the cell division protein assembly, after the assembly of the Z ring, by probably suppressing recruitment of FtsL and/or DivIC to the division machinery. The chain is Cell division suppressor protein YneA from Geobacillus thermodenitrificans (strain NG80-2).